The sequence spans 202 residues: Lipid A acyltransferase PagP (202 aa).

Residues 1–25 (MNYKDIINACILSGVFLLHSPSALA) form the signal peptide. Catalysis depends on residues His-74, Asp-117, and Ser-118.

This sequence belongs to the lipid A palmitoyltransferase family. Homodimer.

It is found in the cell outer membrane. The enzyme catalyses a lipid A + a 1,2-diacyl-sn-glycero-3-phosphocholine = a hepta-acyl lipid A + a 2-acyl-sn-glycero-3-phosphocholine. The catalysed reaction is a lipid IVA + a 1,2-diacyl-sn-glycero-3-phosphocholine = a lipid IVB + a 2-acyl-sn-glycero-3-phosphocholine. It carries out the reaction a lipid IIA + a 1,2-diacyl-sn-glycero-3-phosphocholine = a lipid IIB + a 2-acyl-sn-glycero-3-phosphocholine. In terms of biological role, transfers a fatty acid residue from the sn-1 position of a phospholipid to the N-linked hydroxyfatty acid chain on the proximal unit of lipid A or its precursors. In Yersinia pseudotuberculosis serotype IB (strain PB1/+), this protein is Lipid A acyltransferase PagP.